Here is a 40-residue protein sequence, read N- to C-terminus: Photosystem II reaction center protein J (40 aa).

Residues 8–28 form a helical membrane-spanning segment; that stretch reads IPLWIIGTVAGILVIGLIGIF.

Belongs to the PsbJ family. PSII is composed of 1 copy each of membrane proteins PsbA, PsbB, PsbC, PsbD, PsbE, PsbF, PsbH, PsbI, PsbJ, PsbK, PsbL, PsbM, PsbT, PsbX, PsbY, PsbZ, Psb30/Ycf12, at least 3 peripheral proteins of the oxygen-evolving complex and a large number of cofactors. It forms dimeric complexes.

It is found in the plastid. The protein resides in the chloroplast thylakoid membrane. Functionally, one of the components of the core complex of photosystem II (PSII). PSII is a light-driven water:plastoquinone oxidoreductase that uses light energy to abstract electrons from H(2)O, generating O(2) and a proton gradient subsequently used for ATP formation. It consists of a core antenna complex that captures photons, and an electron transfer chain that converts photonic excitation into a charge separation. This Nicotiana sylvestris (Wood tobacco) protein is Photosystem II reaction center protein J.